Reading from the N-terminus, the 437-residue chain is UDP-glucose 6-dehydrogenase (437 aa).

6 residues coordinate NAD(+): Val-11, Asp-30, Lys-35, Thr-86, Thr-122, and Glu-155. Substrate contacts are provided by residues 151–155 (EFLRE), Lys-209, Asn-213, 254–258 (FLHAG), and Gly-262. Cys-265 (nucleophile) is an active-site residue. Lys-268 is an NAD(+) binding site. Lys-326 is a substrate binding site. Arg-333 serves as a coordination point for NAD(+).

Belongs to the UDP-glucose/GDP-mannose dehydrogenase family.

The catalysed reaction is UDP-alpha-D-glucose + 2 NAD(+) + H2O = UDP-alpha-D-glucuronate + 2 NADH + 3 H(+). It participates in nucleotide-sugar biosynthesis; UDP-alpha-D-glucuronate biosynthesis; UDP-alpha-D-glucuronate from UDP-alpha-D-glucose: step 1/1. Its pathway is capsule biogenesis; capsule polysaccharide biosynthesis. In Rhizobium meliloti (strain 1021) (Ensifer meliloti), this protein is UDP-glucose 6-dehydrogenase.